The primary structure comprises 227 residues: 2,3-bisphosphoglycerate-dependent phosphoglycerate mutase (227 aa).

Substrate-binding positions include 8–15, 21–22, Arg-58, 110–113, Lys-121, 137–138, and 181–182; these read RHGKSVWN, TG, ERMY, RR, and GN. His-9 serves as the catalytic Tele-phosphohistidine intermediate. Glu-110 acts as the Proton donor/acceptor in catalysis.

Belongs to the phosphoglycerate mutase family. BPG-dependent PGAM subfamily.

The catalysed reaction is (2R)-2-phosphoglycerate = (2R)-3-phosphoglycerate. It functions in the pathway carbohydrate degradation; glycolysis; pyruvate from D-glyceraldehyde 3-phosphate: step 3/5. Functionally, catalyzes the interconversion of 2-phosphoglycerate and 3-phosphoglycerate. The sequence is that of 2,3-bisphosphoglycerate-dependent phosphoglycerate mutase from Chlamydia abortus (strain DSM 27085 / S26/3) (Chlamydophila abortus).